The chain runs to 267 residues: MVVVAAAPSAATAAPKVLLLSGQPASGGRALPLMVPGPRAAGSEASGTPQARKRQRLTHLSPEEKALRRKLKNRVAAQTARDRKKARMSELEQQVVDLEEENHKLQLENQLLREKTHGLVVENQELRTRLGMDTLDPDEVPEVEAKGSGVRLVAGSAESAALRLCAPLQQVQAQLSPPQNIFPWTLTLLPLQILSLISFWAFWTSWTLSCFSNVLPQSLLVWRNSQRSTQKDLVPYQPPFLCQWGPHQPSWKPLMNSFVLTMYTPSL.

Residues 1–180 (MVVVAAAPSA…VQAQLSPPQN (180 aa)) lie on the Cytoplasmic side of the membrane. Residues 35–56 (VPGPRAAGSEASGTPQARKRQR) form a disordered region. At Ser61 the chain carries Phosphoserine. Positions 63–126 (EEKALRRKLK…HGLVVENQEL (64 aa)) constitute a bZIP domain. The tract at residues 65-87 (KALRRKLKNRVAAQTARDRKKAR) is basic motif. The interval 69-85 (RKLKNRVAAQTARDRKK) is nuclear localization signal (NLS). A leucine-zipper region spans residues 91 to 126 (LEQQVVDLEEENHKLQLENQLLREKTHGLVVENQEL). The helical; Signal-anchor for type II membrane protein transmembrane segment at 181–198 (IFPWTLTLLPLQILSLIS) threads the bilayer. Topologically, residues 199 to 267 (FWAFWTSWTL…FVLTMYTPSL (69 aa)) are lumenal. The tract at residues 230-256 (QKDLVPYQPPFLCQWGPHQPSWKPLMN) is necessary for the translational pausing of its own mRNA.

Belongs to the bZIP family. In terms of assembly, isoform 1 interacts with HM13. Isoform 1 interacts with RNF139; the interaction induces ubiquitination and degradation of isoform 1. Isoform 1 interacts (via luminal domain) with DERL1; the interaction obviates the need for ectodomain shedding prior HM13/SPP-mediated XBP1 isoform 1 cleavage. Isoform 1 interacts with isoform 2; the interaction sequesters isoform 2 from the nucleus and enhances isoform 2 degradation in the cytoplasm. Isoform 1 interacts with HDAC3 and AKT1; the interactions occur in endothelial cell (EC) under disturbed flow. Isoform 1 interacts with the oncoprotein FOS. Isoform 2 interacts with ATF6; the interaction occurs in a ER stress-dependent manner and is required for DNA binding to the unfolded protein response element (UPRE). Isoform 2 interacts with PIK3R1; the interaction is direct and induces translocation of XBP1 isoform 2 into the nucleus and the unfolded protein response (UPR) XBP1-dependent target genes activation in a ER stress- and/or insulin-dependent but PI3K-independent manner. Isoform 2 interacts with SIRT1. Isoform 2 interacts with PIK3R1 and PIK3R2; the interactions are direct and induce translocation of XBP1 isoform 2 into the nucleus and the unfolded protein response (UPR) XBP1-dependent target genes activation in a ER stress- and/or insulin-dependent but PI3K-independent manner. Isoform 2 interacts with FOXO1; the interaction is direct and leads to FOXO1 ubiquitination and degradation via the proteasome pathway in hepatocytes. Acetylated by EP300; acetylation positively regulates the transcriptional activity of XBP1 isoform 2. Isoform 2 is deacetylated by SIRT1; deacetylation negatively regulates the transcriptional activity of XBP1 isoform 2. Post-translationally, ubiquitinated, leading to proteasomal degradation in response to ER stress. In terms of processing, X-box-binding protein 1, cytoplasmic form and luminal form are produced by intramembrane proteolytic cleavage of ER membrane-anchored isoform 1 triggered by HM13/SPP in a DERL1-RNF139-dependent and VCP/p97-independent manner. X-box-binding protein 1, luminal form is ubiquitinated leading to proteasomal degradation. Isoform 1 and isoform 2 are expressed at higher level in branch curves of vessel walls and in atherosclerotic plaques relative to healthy segments of the same aortas (at protein level). Expressed in skeletal muscles, plasma cells and pancreatic beta cells. Isoform 1 and isoform 2 are expressed in gonadal adipose tissue. Isoform 1 is expressed in inguinal adipose tissue.

The protein resides in the endoplasmic reticulum. It is found in the nucleus. The protein localises to the cytoplasm. Its subcellular location is the endoplasmic reticulum membrane. It localises to the membrane. Its function is as follows. Functions as a transcription factor during endoplasmic reticulum stress by regulating the unfolded protein response (UPR). Required for cardiac myogenesis and hepatogenesis during embryonic development and the development of secretory tissues such as exocrine pancreas and salivary gland. Involved in differentiation of B lymphocytes to plasma cells and production of immunoglobulins. Modulates the cellular response to ER stress in a PIK3R-dependent manner. Binds to the cis-acting X box present in the promoter regions of major histocompatibility complex class II genes. Involved in VEGF-induced endothelial cell (EC) proliferation and retinal blood vessel formation during embryonic development but also for angiogenesis in adult tissues under ischemic conditions. Also functions as a major regulator of the UPR in obesity-induced insulin resistance and type 2 diabetes for the management of obesity and diabetes prevention. Functionally, plays a role in the unconventional cytoplasmic splicing processing of its own mRNA triggered by the endoplasmic reticulum (ER) transmembrane endoribonuclease ERN1: upon ER stress, the emerging XBP1 polypeptide chain, as part of a mRNA-ribosome-nascent chain (R-RNC) complex, cotranslationally recruits its own unprocessed mRNA through transient docking to the ER membrane and translational pausing, therefore facilitating efficient IRE1-mediated XBP1 mRNA isoform 2 production. In endothelial cells (EC), associated with KDR, promotes IRE1-mediated XBP1 mRNA isoform 2 production in a vascular endothelial growth factor (VEGF)-dependent manner, leading to EC proliferation and angiogenesis. Functions as a negative feed-back regulator of the potent transcription factor XBP1 isoform 2 protein levels through proteasome-mediated degradation, thus preventing the constitutive activation of the ER stress response signaling pathway. Inhibits the transactivation activity of XBP1 isoform 2 in myeloma cells. Acts as a weak transcriptional factor. Together with HDAC3, contributes to the activation of NFE2L2-mediated HMOX1 transcription factor gene expression in a PI(3)K/mTORC2/Akt-dependent signaling pathway leading to EC survival under disturbed flow/oxidative stress. Binds to the ER stress response element (ERSE) upon ER stress. Binds to the consensus 5'-GATGACGTG[TG]N(3)[AT]T-3' sequence related to cAMP responsive element (CRE)-like sequences. Binds the Tax-responsive element (TRE) present in the long terminal repeat (LTR) of T-cell leukemia virus type 1 (HTLV-I) and to the TPA response elements (TRE). Associates preferentially to the HDAC3 gene promoter region in a static flow-dependent manner. Binds to the CDH5/VE-cadherin gene promoter region. Functions as a stress-inducible potent transcriptional activator during endoplasmic reticulum (ER) stress by inducing unfolded protein response (UPR) target genes via binding to the UPR element (UPRE). Up-regulates target genes encoding ER chaperones and ER-associated degradation (ERAD) components to enhance the capacity of productive folding and degradation mechanism, respectively, in order to maintain the homeostasis of the ER under ER stress. Plays a role in the production of immunoglobulins and interleukin-6 in the presence of stimuli required for plasma cell differentiation, and promotes as well membrane phospholipid biosynthesis necessary for ER expansion. Contributes to the VEGF-induced endothelial cell (EC) growth and proliferation in a Akt/GSK-dependent and/or -independent signaling pathway, respectively, leading to beta-catenin nuclear translocation and E2F2 gene expression. Promotes umbilical vein EC apoptosis and atherosclerotisis development in a caspase-dependent signaling pathway, and contributes to VEGF-induced EC proliferation and angiogenesis in adult tissues under ischemic conditions. Involved in the regulation of endostatin-induced autophagy in EC through BECN1 transcriptional activation. Plays a role as an oncogene by promoting tumor progression: stimulates zinc finger protein SNAI1 transcription to induce epithelial-to-mesenchymal (EMT) transition, cell migration and invasion of breast cancer cells. Involved in adipocyte differentiation by regulating lipogenic gene expression during lactation. Plays a role in the survival of both dopaminergic neurons of the substantia nigra pars compacta (SNpc), by maintaining protein homeostasis and of myeloma cells. Increases insulin sensitivity in the liver as a response to a high carbohydrate diet, resulting in improved glucose tolerance. Also improves glucose homeostasis in an ER stress- and/or insulin-independent manner through both binding and proteasome-induced degradation of the transcription factor FOXO1, hence resulting in suppression of gluconeogenic genes expression and in a reduction of blood glucose levels. Controls the induction of de novo fatty acid synthesis in hepatocytes by regulating the expression of a subset of lipogenic genes in an ER stress- and UPR-independent manner. Binds to the 5'-CCACG-3' motif in the PPARG promoter. Associates preferentially to the HDAC3 gene promoter region in a disturbed flow-dependent manner. Binds to the BECN1 gene promoter region. Binds to the CDH5/VE-cadherin gene promoter region. Binds to the ER stress response element (ERSE) upon ER stress. The sequence is that of X-box-binding protein 1 from Mus musculus (Mouse).